A 1091-amino-acid polypeptide reads, in one-letter code: Sodium/potassium exporting P-type ATPase 5 (1091 aa).

Topologically, residues 1-63 are cytoplasmic; sequence MSEGTVKENN…LGDDTKIDYK (63 aa). A helical transmembrane segment spans residues 64–84; the sequence is AMVLHQVCNAMIMVLVISMAI. Residues 85 to 90 lie on the Extracellular side of the membrane; the sequence is SFAVRD. A helical membrane pass occupies residues 91 to 111; that stretch reads WITGGVISFVIAVNVLIGLVQ. Residues 112–282 are Cytoplasmic-facing; the sequence is EYKATKTMNS…TNVGTPLHRK (171 aa). A helical membrane pass occupies residues 283–303; it reads LSKLAVLLFWIAVLFAIIVMA. The Extracellular portion of the chain corresponds to 304 to 312; the sequence is SQKFDVDKR. A helical membrane pass occupies residues 313–333; sequence VAIYAICVALSMIPSSLVVVL. The Cytoplasmic portion of the chain corresponds to 334–815; it reads TITMSVGAAV…RRMTDNIQKF (482 aa). Catalysis depends on Asp-369, which acts as the 4-aspartylphosphate intermediate. 2 residues coordinate Mg(2+): Asp-369 and Thr-371. Residues Thr-371 and Glu-483 each contribute to the ATP site. Residues 499–525 are disordered; the sequence is ALTGEKSTNQSNENDQSSLSQHNEKPG. The segment covering 503–519 has biased composition (polar residues); sequence EKSTNQSNENDQSSLSQ. Lys-561, Arg-606, Thr-673, Gly-674, Asp-675, Arg-732, and Lys-738 together coordinate ATP. Residue Asp-757 coordinates Mg(2+). Asn-760 serves as a coordination point for ATP. The chain crosses the membrane as a helical span at residues 816 to 836; the sequence is VLQLLAENVAQALYLIIGLVF. At 837-848 the chain is on the extracellular side; the sequence is RDENGKSVFPLS. A helical transmembrane segment spans residues 849–869; sequence PVEVLWIIVVTSCFPAMGLGL. Residues 870-885 are Cytoplasmic-facing; that stretch reads EKAAPDLMDRPPNDSE. The helical transmembrane segment at 886–906 threads the bilayer; it reads VGIFTWEVIIDTFAYGIIMTG. Topologically, residues 907–943 are extracellular; that stretch reads SCMASFTGSLYGINSGRLGHDCDGTYNSSCRDVYRSR. Residues 944 to 964 traverse the membrane as a helical segment; it reads SAAFATMTWCALILAWEVVDM. Residues 965 to 991 lie on the Cytoplasmic side of the membrane; the sequence is RRSFFRMHPDTDSPVKEFFRSIWGNQF. A helical transmembrane segment spans residues 992-1012; it reads LFWSIIFGFVSAFPVVYIPVI. Topologically, residues 1013-1021 are extracellular; it reads NDKVFLHKP. A helical transmembrane segment spans residues 1022-1042; that stretch reads IGAEWGLAIAFTIAFWIGAEL. Topologically, residues 1043–1091 are cytoplasmic; it reads YKCGKRRYFKTQRAHNSENDLERSSKHDPFEAYSTSTTLQSEINISVKH.

Belongs to the cation transport ATPase (P-type) (TC 3.A.3) family. Type IID subfamily. It depends on Mg(2+) as a cofactor. In terms of processing, the active site is phosphorylated in presence of sodium or potassium and in conditions of higher pH. Not phosphorylated in presence of calcium ions.

It localises to the cell membrane. The enzyme catalyses Na(+)(in) + ATP + H2O = Na(+)(out) + ADP + phosphate + H(+). It carries out the reaction K(+)(in) + ATP + H2O = K(+)(out) + ADP + phosphate + H(+). In terms of biological role, catalyzes the hydrolysis of ATP coupled with the export of sodium and potassium from the cell. May export potassium less efficiently. May transport other cations such as lithium. Sodium/potassium efflux ATPases are involved in salt tolerance and maintaining the membrane potential across the plasma membrane in high salinity (Na+) or alkaline (K+) environments. In Saccharomyces cerevisiae (strain ATCC 204508 / S288c) (Baker's yeast), this protein is Sodium/potassium exporting P-type ATPase 5.